The following is a 204-amino-acid chain: Oocyte-specific homeobox protein 1 (204 aa).

Residues 28 to 73 form a disordered region; it reads EPARNLAFQMRQSPLVTPGSTTKSSLSVPERNLLKQESQGPSRQSG. Polar residues-rich tracts occupy residues 37–54 and 62–72; these read MRQSPLVTPGSTTKSSLS and KQESQGPSRQS. The segment at residues 94 to 153 is a DNA-binding region (homeobox); it reads FRKERTVYTKEQQGLLQKHFDECQYPNKKKIVELALSVGVTKREIKIWFKNNRAKYRRMN.

This sequence belongs to the paired homeobox family. Obox subfamily. As to expression, specifically expressed in oocytes and early embryos.

It is found in the nucleus. Functionally, transcription factor required for zygotic genome activation (ZGA), a critical event in early embryonic development during which the developmental control passes from maternally provided mRNAs to the expression of the zygotic genome after fertilization. Together with other Obox family members, required in early two-cell stage embryos to kick-start the major ZGA wave by facilitating RNA Polymerase II 'pre-configuration', during which RNA Polymerase II relocates from the initial one-cell stage binding targets to ZGA gene promoters and distal enhancers. Mechanistically, promotes recruitment of RNA Polymerase II from (CG-rich) non-ZGA genes to (CG-poor) ZGA genes at the two-cell stage. Binds to regulatory DNA sequences containing a 5'-ACNCCTTTAATCCCAG-3' sequence motif. Most maternal and zygotic Obox family proteins can compensate for one another. In addition to its role in ZGA, promotes embryonic stem cell pluripotency. The protein is Oocyte-specific homeobox protein 1 of Mus musculus (Mouse).